A 311-amino-acid chain; its full sequence is Ribosomal RNA small subunit methyltransferase H (311 aa).

S-adenosyl-L-methionine-binding positions include alanine 33–histidine 35, aspartate 53, phenylalanine 80, aspartate 101, and glutamine 108.

This sequence belongs to the methyltransferase superfamily. RsmH family.

It localises to the cytoplasm. The catalysed reaction is cytidine(1402) in 16S rRNA + S-adenosyl-L-methionine = N(4)-methylcytidine(1402) in 16S rRNA + S-adenosyl-L-homocysteine + H(+). Specifically methylates the N4 position of cytidine in position 1402 (C1402) of 16S rRNA. This Clostridioides difficile (strain 630) (Peptoclostridium difficile) protein is Ribosomal RNA small subunit methyltransferase H.